A 491-amino-acid polypeptide reads, in one-letter code: UDP-N-acetylmuramate--L-alanine ligase (491 aa).

126–132 contributes to the ATP binding site; it reads GTHGKTT.

Belongs to the MurCDEF family.

Its subcellular location is the cytoplasm. It carries out the reaction UDP-N-acetyl-alpha-D-muramate + L-alanine + ATP = UDP-N-acetyl-alpha-D-muramoyl-L-alanine + ADP + phosphate + H(+). The protein operates within cell wall biogenesis; peptidoglycan biosynthesis. Functionally, cell wall formation. The polypeptide is UDP-N-acetylmuramate--L-alanine ligase (Escherichia coli O1:K1 / APEC).